The following is a 107-amino-acid chain: uncharacterized protein (107 aa).

This is an uncharacterized protein from Dictyostelium discoideum (Social amoeba).